A 101-amino-acid polypeptide reads, in one-letter code: Small ribosomal subunit protein bS18c (101 aa).

Belongs to the bacterial ribosomal protein bS18 family. Part of the 30S ribosomal subunit.

It localises to the plastid. Its subcellular location is the chloroplast. The sequence is that of Small ribosomal subunit protein bS18c from Nymphaea alba (White water-lily).